The primary structure comprises 336 residues: DNA-directed RNA polymerase subunit alpha (336 aa).

Residues 1–235 form an alpha N-terminal domain (alpha-NTD) region; the sequence is MIEFVIPKKL…HFKIVTEGLP (235 aa). Positions 264–336 are alpha C-terminal domain (alpha-CTD); sequence RENSDVYNRK…KFGLELRKGE (73 aa).

Belongs to the RNA polymerase alpha chain family. In terms of assembly, homodimer. The RNAP catalytic core consists of 2 alpha, 1 beta, 1 beta' and 1 omega subunit. When a sigma factor is associated with the core the holoenzyme is formed, which can initiate transcription.

The catalysed reaction is RNA(n) + a ribonucleoside 5'-triphosphate = RNA(n+1) + diphosphate. DNA-dependent RNA polymerase catalyzes the transcription of DNA into RNA using the four ribonucleoside triphosphates as substrates. The sequence is that of DNA-directed RNA polymerase subunit alpha from Thermotoga maritima (strain ATCC 43589 / DSM 3109 / JCM 10099 / NBRC 100826 / MSB8).